The following is a 250-amino-acid chain: Type III pantothenate kinase (250 aa).

Residue 6–13 (DVGNTNTV) participates in ATP binding. A substrate-binding site is contributed by 103-106 (GADR). Catalysis depends on D105, which acts as the Proton acceptor. K(+) is bound at residue D125. T128 contributes to the ATP binding site. A substrate-binding site is contributed by T180.

Belongs to the type III pantothenate kinase family. In terms of assembly, homodimer. Requires NH4(+) as cofactor. It depends on K(+) as a cofactor.

It is found in the cytoplasm. It carries out the reaction (R)-pantothenate + ATP = (R)-4'-phosphopantothenate + ADP + H(+). Its pathway is cofactor biosynthesis; coenzyme A biosynthesis; CoA from (R)-pantothenate: step 1/5. Its function is as follows. Catalyzes the phosphorylation of pantothenate (Pan), the first step in CoA biosynthesis. The polypeptide is Type III pantothenate kinase (Frankia casuarinae (strain DSM 45818 / CECT 9043 / HFP020203 / CcI3)).